The sequence spans 126 residues: Large ribosomal subunit protein bL19 (126 aa).

It belongs to the bacterial ribosomal protein bL19 family.

Functionally, this protein is located at the 30S-50S ribosomal subunit interface and may play a role in the structure and function of the aminoacyl-tRNA binding site. The polypeptide is Large ribosomal subunit protein bL19 (Thiobacillus denitrificans (strain ATCC 25259 / T1)).